The chain runs to 506 residues: Tyrosine-protein kinase FRK (506 aa).

Residues 43–111 (SQGQYFVALF…PSNYVAEDRS (69 aa)) enclose the SH3 domain. In terms of domain architecture, SH2 spans 117–209 (WFFGAIKRAD…GLCVKLEKPC (93 aa)). T179 carries the post-translational modification Phosphothreonine. The region spanning 235–492 (IQLLKRLGSG…TLHWKLEDYF (258 aa)) is the Protein kinase domain. ATP is bound by residues 241 to 249 (LGSGQFGEV) and K263. The active-site Proton acceptor is D355. Y388 bears the Phosphotyrosine; by autocatalysis mark.

The protein belongs to the protein kinase superfamily. Tyr protein kinase family. SRC subfamily. In terms of assembly, interacts (via the SH3-domain) with PTEN. Interacts with RB1. Highly expressed in stomach, small intestine and colon. Concentrated in the brush border membranes of epithelial cells, throughout the maturation axis of the adult small intestine.

It is found in the cytoplasm. The protein resides in the nucleus. The enzyme catalyses L-tyrosyl-[protein] + ATP = O-phospho-L-tyrosyl-[protein] + ADP + H(+). Functionally, non-receptor tyrosine-protein kinase that negatively regulates cell proliferation. Positively regulates PTEN protein stability through phosphorylation of PTEN on 'Tyr-336', which in turn prevents its ubiquitination and degradation, possibly by reducing its binding to NEDD4. May function as a tumor suppressor. The sequence is that of Tyrosine-protein kinase FRK (Frk) from Rattus norvegicus (Rat).